The primary structure comprises 309 residues: MITFLPIIFSILIVVTFVIGNFANGFIALANSIEWFKRQKISFADQILTALAVSRVGLLWVLLLNWYATELNPAFYSIEVRITAYNVWAVISHFSNWLATSLSIFYLLKIANFSNLIFLRLKRRVKSVVLVILLGPLLFLVCHLFVINMNQIIWTKEYEGNMTWKIKLRSAMYLSDTTVTILANLVPFTLTLISFLLLICSLCKHLKKMQLHGKGSQDPSMKVHIKALQTVTSFLLLCAIYFLSVIMSVWSFESLENKPVFMFCEAITFSYPSTHPFILIWGNKKLKQTFLSVLWHVRYWVKGEKPSSS.

Position 1 (methionine 1) is a topological domain, extracellular. A helical membrane pass occupies residues 2–22; that stretch reads ITFLPIIFSILIVVTFVIGNF. Residues 23-46 are Cytoplasmic-facing; that stretch reads ANGFIALANSIEWFKRQKISFADQ. Residues 47 to 67 traverse the membrane as a helical segment; the sequence is ILTALAVSRVGLLWVLLLNWY. Residues 68-86 are Extracellular-facing; the sequence is ATELNPAFYSIEVRITAYN. The chain crosses the membrane as a helical span at residues 87-107; sequence VWAVISHFSNWLATSLSIFYL. Over 108–126 the chain is Cytoplasmic; sequence LKIANFSNLIFLRLKRRVK. The helical transmembrane segment at 127-147 threads the bilayer; sequence SVVLVILLGPLLFLVCHLFVI. The Extracellular portion of the chain corresponds to 148-178; the sequence is NMNQIIWTKEYEGNMTWKIKLRSAMYLSDTT. Asparagine 161 carries N-linked (GlcNAc...) asparagine glycosylation. The chain crosses the membrane as a helical span at residues 179-199; sequence VTILANLVPFTLTLISFLLLI. Over 200 to 229 the chain is Cytoplasmic; that stretch reads CSLCKHLKKMQLHGKGSQDPSMKVHIKALQ. Residues 230 to 250 form a helical membrane-spanning segment; it reads TVTSFLLLCAIYFLSVIMSVW. Over 251 to 259 the chain is Extracellular; that stretch reads SFESLENKP. Residues 260 to 280 traverse the membrane as a helical segment; it reads VFMFCEAITFSYPSTHPFILI. Topologically, residues 281 to 309 are cytoplasmic; it reads WGNKKLKQTFLSVLWHVRYWVKGEKPSSS.

This sequence belongs to the G-protein coupled receptor T2R family.

Its subcellular location is the membrane. The protein localises to the cell projection. The protein resides in the cilium membrane. Its function is as follows. Receptor that may play a role in the perception of bitterness and is gustducin-linked. May play a role in sensing the chemical composition of the gastrointestinal content. The activity of this receptor may stimulate alpha gustducin, mediate PLC-beta-2 activation and lead to the gating of TRPM5. In airway epithelial cells, binding of bitter compounds increases the intracellular calcium ion concentration and stimulates ciliary beat frequency. This Gorilla gorilla gorilla (Western lowland gorilla) protein is Taste receptor type 2 member 46 (TAS2R46).